A 380-amino-acid polypeptide reads, in one-letter code: O-phospho-L-seryl-tRNA:Cys-tRNA synthase (380 aa).

Pyridoxal 5'-phosphate-binding positions include 86 to 87 (AR), N192, and 215 to 217 (SGH). Residue K218 is modified to N6-(pyridoxal phosphate)lysine.

Belongs to the SepCysS family. Homodimer. Interacts with SepRS. The cofactor is pyridoxal 5'-phosphate.

The enzyme catalyses O-phospho-L-seryl-tRNA(Cys) + hydrogen sulfide + H(+) = L-cysteinyl-tRNA(Cys) + phosphate. Its function is as follows. Converts O-phospho-L-seryl-tRNA(Cys) (Sep-tRNA(Cys)) to L-cysteinyl-tRNA(Cys) (Cys-tRNA(Cys)). The sequence is that of O-phospho-L-seryl-tRNA:Cys-tRNA synthase from Methanococcus maripaludis (strain C6 / ATCC BAA-1332).